The primary structure comprises 70 residues: MPRLPPILRLLQAPEKYTVIPKARISSKPAKSPTSAMDQAVGMSVIIAGFMVPAGWVLSHLESYKRSSAA.

The transit peptide at 1 to 24 (MPRLPPILRLLQAPEKYTVIPKAR) directs the protein to the mitochondrion. Residues 25–35 (ISSKPAKSPTS) are Mitochondrial matrix-facing. The helical transmembrane segment at 36–59 (AMDQAVGMSVIIAGFMVPAGWVLS) threads the bilayer. Over 60-70 (HLESYKRSSAA) the chain is Mitochondrial intermembrane.

Belongs to the cytochrome c oxidase VIII family. As to quaternary structure, component of the cytochrome c oxidase (complex IV, CIV), a multisubunit enzyme composed of 14 subunits. The complex is composed of a catalytic core of 3 subunits MT-CO1, MT-CO2 and MT-CO3, encoded in the mitochondrial DNA, and 11 supernumerary subunits COX4I, COX5A, COX5B, COX6A, COX6B, COX6C, COX7A, COX7B, COX7C, COX8 and NDUFA4, which are encoded in the nuclear genome. The complex exists as a monomer or a dimer and forms supercomplexes (SCs) in the inner mitochondrial membrane with NADH-ubiquinone oxidoreductase (complex I, CI) and ubiquinol-cytochrome c oxidoreductase (cytochrome b-c1 complex, complex III, CIII), resulting in different assemblies (supercomplex SCI(1)III(2)IV(1) and megacomplex MCI(2)III(2)IV(2)).

It is found in the mitochondrion inner membrane. The protein operates within energy metabolism; oxidative phosphorylation. Its function is as follows. Component of the cytochrome c oxidase, the last enzyme in the mitochondrial electron transport chain which drives oxidative phosphorylation. The respiratory chain contains 3 multisubunit complexes succinate dehydrogenase (complex II, CII), ubiquinol-cytochrome c oxidoreductase (cytochrome b-c1 complex, complex III, CIII) and cytochrome c oxidase (complex IV, CIV), that cooperate to transfer electrons derived from NADH and succinate to molecular oxygen, creating an electrochemical gradient over the inner membrane that drives transmembrane transport and the ATP synthase. Cytochrome c oxidase is the component of the respiratory chain that catalyzes the reduction of oxygen to water. Electrons originating from reduced cytochrome c in the intermembrane space (IMS) are transferred via the dinuclear copper A center (CU(A)) of subunit 2 and heme A of subunit 1 to the active site in subunit 1, a binuclear center (BNC) formed by heme A3 and copper B (CU(B)). The BNC reduces molecular oxygen to 2 water molecules using 4 electrons from cytochrome c in the IMS and 4 protons from the mitochondrial matrix. This is Cytochrome c oxidase subunit 8B, mitochondrial (Cox8b) from Rattus norvegicus (Rat).